We begin with the raw amino-acid sequence, 115 residues long: Large ribosomal subunit protein P2 (115 aa).

Met1 is modified (N-acetylmethionine). Position 19 is a phosphoserine (Ser19). Lys21 is modified (N6-acetyllysine; alternate). At Lys21 the chain carries N6-succinyllysine; alternate. Residues 76 to 90 (APGSAAPAAGSAPAA) are compositionally biased toward low complexity. The disordered stretch occupies residues 76–115 (APGSAAPAAGSAPAAAEEKKDEKKEESEESDDDMGFGLFD). 2 positions are modified to phosphoserine: Ser79 and Ser86. The segment covering 91–101 (AEEKKDEKKEE) has biased composition (basic and acidic residues). A phosphoserine mark is found at Ser102 and Ser105.

The protein belongs to the eukaryotic ribosomal protein P1/P2 family. In terms of assembly, heterodimer with RPLP1 at the lateral ribosomal stalk of the large ribosomal subunit.

In terms of biological role, plays an important role in the elongation step of protein synthesis. The chain is Large ribosomal subunit protein P2 (Rplp2) from Rattus norvegicus (Rat).